A 189-amino-acid chain; its full sequence is NAD(P)H-quinone oxidoreductase subunit 6, chloroplastic (189 aa).

The next 5 helical transmembrane spans lie at 10–30, 32–52, 61–81, 98–118, and 144–164; these read LSLLLLEIGTIIGALGVVLLP, ILYSGFLLGGVLICIAGIYLL, AQVLIYVGAINVIILFAIMLV, GLSSFICFSFFILLSNMIFDT, and LLPFEIVSVLLLVTLVGAVFI.

This sequence belongs to the complex I subunit 6 family. In terms of assembly, NDH is composed of at least 16 different subunits, 5 of which are encoded in the nucleus.

It localises to the plastid. The protein localises to the chloroplast thylakoid membrane. It catalyses the reaction a plastoquinone + NADH + (n+1) H(+)(in) = a plastoquinol + NAD(+) + n H(+)(out). The enzyme catalyses a plastoquinone + NADPH + (n+1) H(+)(in) = a plastoquinol + NADP(+) + n H(+)(out). Its function is as follows. NDH shuttles electrons from NAD(P)H:plastoquinone, via FMN and iron-sulfur (Fe-S) centers, to quinones in the photosynthetic chain and possibly in a chloroplast respiratory chain. The immediate electron acceptor for the enzyme in this species is believed to be plastoquinone. Couples the redox reaction to proton translocation, and thus conserves the redox energy in a proton gradient. This is NAD(P)H-quinone oxidoreductase subunit 6, chloroplastic (ndhG) from Mesostigma viride (Green alga).